We begin with the raw amino-acid sequence, 565 residues long: Formate--tetrahydrofolate ligase (565 aa).

73-80 (TPAGEGKS) provides a ligand contact to ATP.

Belongs to the formate--tetrahydrofolate ligase family.

The catalysed reaction is (6S)-5,6,7,8-tetrahydrofolate + formate + ATP = (6R)-10-formyltetrahydrofolate + ADP + phosphate. Its pathway is one-carbon metabolism; tetrahydrofolate interconversion. In Arthrobacter sp. (strain FB24), this protein is Formate--tetrahydrofolate ligase.